The chain runs to 397 residues: Polyphosphatase (397 aa).

3 residues coordinate Mg(2+): D41, D127, and H148. 3 residues coordinate Mn(2+): D41, D127, and H148. H149, S286, and R381 together coordinate ATP.

It belongs to the PPase class C family. It depends on Mn(2+) as a cofactor. Mg(2+) is required as a cofactor.

It catalyses the reaction [phosphate](n) + H2O = [phosphate](n-1) + phosphate + H(+). Polyphosphatase (polyPase) involved in the degradation of inorganic polyphosphates (polyP) that is able to degrade a range of chains from three to several hundreds of residues in a highly processive manner. Exclusively shows exopolyphosphatase activity, cleaving inside the polyP chain. This is Polyphosphatase from Saccharomyces cerevisiae (strain ATCC 204508 / S288c) (Baker's yeast).